We begin with the raw amino-acid sequence, 159 residues long: SsrA-binding protein (159 aa).

A compositionally biased stretch (basic and acidic residues) spans 131-148 (YDKRQTLREKQDRREAER). Residues 131 to 159 (YDKRQTLREKQDRREAERTISAIKRKQRA) form a disordered region.

The protein belongs to the SmpB family.

The protein localises to the cytoplasm. Required for rescue of stalled ribosomes mediated by trans-translation. Binds to transfer-messenger RNA (tmRNA), required for stable association of tmRNA with ribosomes. tmRNA and SmpB together mimic tRNA shape, replacing the anticodon stem-loop with SmpB. tmRNA is encoded by the ssrA gene; the 2 termini fold to resemble tRNA(Ala) and it encodes a 'tag peptide', a short internal open reading frame. During trans-translation Ala-aminoacylated tmRNA acts like a tRNA, entering the A-site of stalled ribosomes, displacing the stalled mRNA. The ribosome then switches to translate the ORF on the tmRNA; the nascent peptide is terminated with the 'tag peptide' encoded by the tmRNA and targeted for degradation. The ribosome is freed to recommence translation, which seems to be the essential function of trans-translation. In Streptomyces coelicolor (strain ATCC BAA-471 / A3(2) / M145), this protein is SsrA-binding protein.